The chain runs to 215 residues: Cytochrome c biogenesis ATP-binding export protein CcmA (215 aa).

Residues 3 to 215 (LEAENLAGER…MAAFSVEDIA (213 aa)) enclose the ABC transporter domain. 35-42 (GPNGSGKS) lines the ATP pocket.

This sequence belongs to the ABC transporter superfamily. CcmA exporter (TC 3.A.1.107) family. The complex is composed of two ATP-binding proteins (CcmA) and two transmembrane proteins (CcmB).

The protein resides in the cell inner membrane. It carries out the reaction heme b(in) + ATP + H2O = heme b(out) + ADP + phosphate + H(+). In terms of biological role, part of the ABC transporter complex CcmAB involved in the biogenesis of c-type cytochromes; once thought to export heme, this seems not to be the case, but its exact role is uncertain. Responsible for energy coupling to the transport system. The protein is Cytochrome c biogenesis ATP-binding export protein CcmA of Brucella melitensis biotype 1 (strain ATCC 23456 / CCUG 17765 / NCTC 10094 / 16M).